A 651-amino-acid polypeptide reads, in one-letter code: Intraflagellar transport protein 70A (651 aa).

TPR repeat units follow at residues 8 to 41, 42 to 75, 140 to 173, 175 to 207, 372 to 405, 410 to 443, and 445 to 478; these read DGEY…QYRS, RAGL…TPEV, PESE…MGYK, DLSY…GIRE, LTEQ…YDET, IPVL…CNEH, and IWKL…HYDN. The stretch at 494 to 521 forms a coiled coil; that stretch reads YIMTSQNEEAEELMRKIEKEEEQIAYEN. A TPR 8 repeat occupies 530–563; it reads CIVNLVIGTLYCAKGNYEFGISRVIKSLEPYNKK.

It belongs to the TTC30/dfy-1/fleer family.

Its subcellular location is the cell projection. It localises to the cilium. Required for polyglutamylation of axonemal tubulin. Plays a role in anterograde intraflagellar transport (IFT), the process by which cilia precursors are transported from the base of the cilium to the site of their incorporation at the tip. This chain is Intraflagellar transport protein 70A (ift70a), found in Xenopus tropicalis (Western clawed frog).